Here is a 684-residue protein sequence, read N- to C-terminus: Histamine oxidase (684 aa).

A substrate-binding site is contributed by 316 to 327 (YFDSGEYLVGRD). The active-site Proton acceptor is D318. The cysteines at positions 337 and 363 are disulfide-linked. 399–404 (VGNYDY) serves as a coordination point for substrate. The active-site Schiff-base intermediate with substrate; via topaquinone is the Y402. Y402 carries the 2',4',5'-topaquinone modification. Cu cation-binding residues include H451 and H453. Positions 460, 500, 590, and 601 each coordinate Ca(2+). A Mn(2+)-binding site is contributed by D460. D601 is a Mn(2+) binding site. H612 is a Cu cation binding site. The interval 647–684 (SSAAGHCGTGSEREHAAPGGTAVGHSGPDTGGQGHCGH) is disordered. Over residues 675-684 (DTGGQGHCGH) the composition is skewed to gly residues.

It belongs to the copper/topaquinone oxidase family. In terms of assembly, homodimer. The cofactor is Cu cation. It depends on Zn(2+) as a cofactor. Requires Ca(2+) as cofactor. L-topaquinone serves as cofactor. Mn(2+) is required as a cofactor. Post-translationally, topaquinone (TPQ) is generated by copper-dependent autoxidation of a specific tyrosyl residue.

It localises to the cytoplasm. It catalyses the reaction a primary methyl amine + O2 + H2O = an aldehyde + H2O2 + NH4(+). It carries out the reaction histamine + O2 + H2O = imidazole-4-acetaldehyde + H2O2 + NH4(+). Functionally, oxidizes histamine. Other amines including phenethylamine, tyramine, tryptamine, putrescine, and benzylamine also serve as substrate. This Arthrobacter globiformis protein is Histamine oxidase.